Reading from the N-terminus, the 758-residue chain is Microtubule-associated protein tau (758 aa).

Over residues 1–26 the composition is skewed to basic and acidic residues; the sequence is MAEPRQEFEVMEDHAGTYGLGDRKDQ. The segment at 1 to 573 is disordered; the sequence is MAEPRQEFEV…PVPMPDLKNV (573 aa). N-acetylalanine is present on alanine 2. A Phosphotyrosine; by FYN modification is found at tyrosine 18. At tyrosine 29 the chain carries Phosphotyrosine. Residue lysine 44 forms a Glycyl lysine isopeptide (Lys-Gly) (interchain with G-Cter in ubiquitin) linkage. Residues serine 46 and serine 61 each carry the phosphoserine modification. A compositionally biased stretch (polar residues) spans 61-71; that stretch reads SETSDAKSTPT. Threonine 69 and threonine 71 each carry phosphothreonine. The N-linked (Glc) (glycation) lysine; in PHF-tau; in vitro glycan is linked to lysine 87. Threonine 111 is modified (phosphothreonine). 2 stretches are compositionally biased toward basic and acidic residues: residues 179-189 and 207-216; these read EGGRHAPELLK and GGKERPGSKE. Serine 214 bears the Phosphoserine; by SGK1 mark. Residues 217–228 are compositionally biased toward acidic residues; the sequence is EVDEDRDVDESS. Basic and acidic residues predominate over residues 314-323; it reads EQAHSEEHLG. A compositionally biased stretch (low complexity) spans 324 to 340; the sequence is RAAFPGAPGEGPEARGP. 2 stretches are compositionally biased toward basic and acidic residues: residues 344-356 and 381-393; these read EDTK…EPSE and KSKD…DKKA. N-linked (Glc) (glycation) lysine; in PHF-tau; in vitro glycosylation occurs at lysine 383. Positions 442–453 are enriched in low complexity; the sequence is VSSVTSRTGSSG. A compositionally biased stretch (basic and acidic residues) spans 455–466; it reads KEMKLKGADGKT. N-linked (Glc) (glycation) lysine; in PHF-tau; in vitro glycosylation is present at lysine 467. The residue at position 470 (threonine 470) is a Phosphothreonine; by PDPK1. Arginine 472 carries the post-translational modification Omega-N-methylarginine. Residue lysine 480 is glycosylated (N-linked (Glc) (glycation) lysine; in PHF-tau; in vitro). At lysine 480 the chain carries N6,N6-dimethyllysine; alternate. Lysine 480 carries the N6-acetyllysine; alternate modification. Residue asparagine 484 is modified to Deamidated asparagine; in tau and PHF-tau; partial. Threonine 486 bears the Phosphothreonine mark. N-linked (Glc) (glycation) lysine; in PHF-tau; in vitro glycosylation occurs at lysine 491. The span at 491–503 shows a compositional bias: pro residues; that stretch reads KTPPAPKTPPSSG. Position 492 is a phosphothreonine (threonine 492). Phosphothreonine; by PDPK1 is present on threonine 498. 3 positions are modified to phosphoserine: serine 502, serine 508, and serine 512. The segment covering 504 to 531 has biased composition (low complexity); the sequence is EPPKSGDRSGYSSPGSPGTPGSRSRTPS. Position 514 is a phosphotyrosine; by TTBK1 (tyrosine 514). Phosphoserine; by PDPK1 and TTBK1 occurs at positions 515 and 516. At serine 519 the chain carries Phosphoserine; by CK1, PDPK1 and TTBK1. Threonine 522 carries the phosphothreonine; by CK1 and PDPK1 modification. Serine 525 carries an O-linked (GlcNAc) serine glycan. Position 529 is a phosphothreonine; by BRSK1, BRSK2, DYRK2 and PDPK1 (threonine 529). A Phosphoserine; by PKA modification is found at serine 531. Threonine 534 is subject to Phosphothreonine; by PDPK1. An N-linked (Glc) (glycation) lysine; in PHF-tau; in vitro glycan is attached at lysine 542. Residue lysine 542 is modified to N6-acetyllysine. Residue threonine 548 is modified to Phosphothreonine; by GSK3-beta and PDPK1. Residue lysine 551 is glycosylated (N-linked (Glc) (glycation) lysine; in PHF-tau; in vitro). Residue serine 552 is modified to Phosphoserine; by PDPK1. Serine 554 is modified (phosphoserine; by PHK). The O-linked (GlcNAc) serine glycan is linked to serine 555. Tau/MAP repeat units follow at residues 561–591, 592–622, 623–653, and 654–685; these read QTAP…GGGK, VQII…GGGS, VQIV…GGGQ, and VEVK…GGGN. Residues 561-685 are microtubule-binding domain; sequence QTAPVPMPDL…NITHVPGGGN (125 aa). A Glycyl lysine isopeptide (Lys-Gly) (interchain with G-Cter in ubiquitin); in PHF-tau cross-link involves residue lysine 571. Lysine 576 is a glycosylation site (N-linked (Glc) (glycation) lysine; in PHF-tau; in vitro). Position 576 is an N6-acetyllysine; alternate (lysine 576). N6-methyllysine; alternate is present on lysine 576. A Glycyl lysine isopeptide (Lys-Gly) (interchain with G-Cter in ubiquitin); alternate cross-link involves residue lysine 576. The residue at position 579 (serine 579) is a Phosphoserine; by MARK1, MARK2, MARK3, MARK4, BRSK1, BRSK2 and PHK. A Glycyl lysine isopeptide (Lys-Gly) (interchain with G-Cter in ubiquitin) cross-link involves residue lysine 584. Asparagine 596 bears the Deamidated asparagine; in tau and PHF-tau; partial mark. N-linked (Glc) (glycation) lysine; in PHF-tau; in vitro glycans are attached at residues lysine 597 and lysine 598. The residue at position 598 (lysine 598) is an N6-acetyllysine; alternate. Residue lysine 598 forms a Glycyl lysine isopeptide (Lys-Gly) (interchain with G-Cter in ubiquitin); alternate linkage. Serine 602 carries the phosphoserine; by PHK modification. Lysine 607 bears the N6-acetyllysine mark. Cysteine 608 and cysteine 639 are disulfide-bonded. Phosphoserine is present on serine 610. Lysine 615 is subject to N6-acetyllysine; alternate. Lysine 615 is covalently cross-linked (Glycyl lysine isopeptide (Lys-Gly) (interchain with G-Cter in ubiquitin); alternate). Serine 622 is subject to Phosphoserine; by PHK. The residue at position 628 (lysine 628) is an N6,N6-dimethyllysine; alternate. N6-acetyllysine; alternate occurs at positions 628, 634, and 638. Lysine 628 participates in a covalent cross-link: Glycyl lysine isopeptide (Lys-Gly) (interchain with G-Cter in ubiquitin); in PHF-tau. Glycyl lysine isopeptide (Lys-Gly) (interchain with G-Cter in ubiquitin); alternate cross-links involve residues lysine 634 and lysine 638. The residue at position 641 (serine 641) is a Phosphoserine. Lysine 648, lysine 660, and lysine 664 each carry N6-acetyllysine; alternate. Residues lysine 648, lysine 660, and lysine 664 each participate in a glycyl lysine isopeptide (Lys-Gly) (interchain with G-Cter in ubiquitin); alternate cross-link. Lysine 664 carries an N-linked (Glc) (glycation) lysine; in PHF-tau; in vitro glycan. Arginine 666 is subject to Omega-N-methylarginine. Serine 669 is modified (phosphoserine; by PHK). Lysine 670 carries N-linked (Glc) (glycation) lysine; in PHF-tau; in vitro glycosylation. Lysine 670 is covalently cross-linked (Glycyl lysine isopeptide (Lys-Gly) (interchain with G-Cter in ubiquitin); in PHF-tau). Phosphoserine is present on serine 673. An N-linked (Glc) (glycation) lysine; in PHF-tau; in vitro glycan is attached at lysine 686. Lysine 686 carries the N6-acetyllysine; alternate modification. Residue lysine 686 forms a Glycyl lysine isopeptide (Lys-Gly) (interchain with G-Cter in ubiquitin); alternate linkage. Lysine 692 is covalently cross-linked (Glycyl lysine isopeptide (Lys-Gly) (interchain with G-Cter in ubiquitin)). Residue lysine 702 is modified to N6-acetyllysine; alternate. Lysine 702 is covalently cross-linked (Glycyl lysine isopeptide (Lys-Gly) (interchain with G-Cter in ubiquitin); alternate). Tyrosine 711 is subject to Phosphotyrosine. Serine 713 carries the phosphoserine; by CK1 and PDPK1 modification. A disordered region spans residues 715 to 734; the sequence is VVSGDTSPRHLSNVSSTGSI. Serine 717 is subject to Phosphoserine; alternate. O-linked (GlcNAc) serine; alternate glycosylation occurs at serine 717. A compositionally biased stretch (polar residues) spans 718–733; sequence GDTSPRHLSNVSSTGS. The residue at position 720 (threonine 720) is a Phosphothreonine. Residue serine 721 is modified to Phosphoserine; by CK1 and PDPK1. A Phosphoserine modification is found at serine 726. The residue at position 733 (serine 733) is a Phosphoserine; by CaMK2 and TTBK1. The residue at position 739 (serine 739) is a Phosphoserine; by PDPK1 and TTBK1. Threonine 744 bears the Phosphothreonine; by TTBK1 mark.

Interacts with MARK1, MARK2, MARK3 and MARK4. Interacts with PSMC2 through SQSTM1. Interacts with SQSTM1 when polyubiquitinated. Interacts with FKBP4. Binds to CSNK1D. Interacts with SGK1. Interacts with EPM2A; the interaction dephosphorylates MAPT at Ser-396. Interacts with PIN1. Interacts with LRRK2. Interacts with LRP1, leading to endocytosis; this interaction is reduced in the presence of LRPAP1/RAP. Post-translationally, phosphorylation at serine and threonine residues in S-P or T-P motifs by proline-directed protein kinases (PDPK1, CDK1, CDK5, GSK3, MAPK) (only 2-3 sites per protein in interphase, seven-fold increase in mitosis, and in the form associated with paired helical filaments (PHF-tau)), and at serine residues in K-X-G-S motifs by MAP/microtubule affinity-regulating kinase (MARK1, MARK2, MARK3 or MARK4), causing detachment from microtubules, and their disassembly. Phosphorylation decreases with age. Phosphorylation within tau/MAP's repeat domain or in flanking regions seems to reduce tau/MAP's interaction with, respectively, microtubules or plasma membrane components. Phosphorylation on Ser-610, Ser-622, Ser-641 and Ser-673 in several isoforms during mitosis. Phosphorylation at Ser-548 by GSK3B reduces ability to bind and stabilize microtubules. Phosphorylation at Ser-579 by BRSK1 and BRSK2 in neurons affects ability to bind microtubules and plays a role in neuron polarization. Phosphorylated at Ser-554, Ser-579, Ser-602, Ser-606 and Ser-669 by PHK. Phosphorylation at Ser-214 by SGK1 mediates microtubule depolymerization and neurite formation in hippocampal neurons. There is a reciprocal down-regulation of phosphorylation and O-GlcNAcylation. Phosphorylation on Ser-717 completely abolishes the O-GlcNAcylation on this site, while phosphorylation on Ser-713 and Ser-721 reduces glycosylation by a factor of 2 and 4 respectively. Phosphorylation on Ser-721 is reduced by about 41.5% by GlcNAcylation on Ser-717. Dephosphorylated at several serine and threonine residues by the serine/threonine phosphatase PPP5C. In terms of processing, polyubiquitinated. Requires functional TRAF6 and may provoke SQSTM1-dependent degradation by the proteasome. PHF-tau can be modified by three different forms of polyubiquitination. 'Lys-48'-linked polyubiquitination is the major form, 'Lys-6'-linked and 'Lys-11'-linked polyubiquitination also occur. O-glycosylated. O-GlcNAcylation content is around 8.2%. There is reciprocal down-regulation of phosphorylation and O-GlcNAcylation. Phosphorylation on Ser-717 completely abolishes the O-GlcNAcylation on this site, while phosphorylation on Ser-713 and Ser-721 reduces O-GlcNAcylation by a factor of 2 and 4 respectively. O-GlcNAcylation on Ser-717 decreases the phosphorylation on Ser-721 by about 41.5%. Post-translationally, glycation of PHF-tau, but not normal brain TAU/MAPT. Glycation is a non-enzymatic post-translational modification that involves a covalent linkage between a sugar and an amino group of a protein molecule forming ketoamine. Subsequent oxidation, fragmentation and/or cross-linking of ketoamine leads to the production of advanced glycation endproducts (AGES). Glycation may play a role in stabilizing PHF aggregation leading to tangle formation in AD. Expressed in neurons. Isoform PNS-tau is expressed in the peripheral nervous system while the others are expressed in the central nervous system.

It is found in the cytoplasm. The protein localises to the cytosol. The protein resides in the cell membrane. It localises to the cytoskeleton. Its subcellular location is the cell projection. It is found in the axon. The protein localises to the dendrite. The protein resides in the secreted. Promotes microtubule assembly and stability, and might be involved in the establishment and maintenance of neuronal polarity. The C-terminus binds axonal microtubules while the N-terminus binds neural plasma membrane components, suggesting that tau functions as a linker protein between both. Axonal polarity is predetermined by TAU/MAPT localization (in the neuronal cell) in the domain of the cell body defined by the centrosome. The short isoforms allow plasticity of the cytoskeleton whereas the longer isoforms may preferentially play a role in its stabilization. The protein is Microtubule-associated protein tau of Homo sapiens (Human).